A 24-amino-acid polypeptide reads, in one-letter code: Small ribosomal subunit protein uS5 (24 aa).

This sequence belongs to the universal ribosomal protein uS5 family. As to quaternary structure, part of the 30S ribosomal subunit. Contacts proteins S4 and S8.

Functionally, with S4 and S12 plays an important role in translational accuracy. Located at the back of the 30S subunit body where it stabilizes the conformation of the head with respect to the body. The polypeptide is Small ribosomal subunit protein uS5 (rpsE) (Vibrio proteolyticus (Aeromonas proteolytica)).